The following is a 479-amino-acid chain: D-alanyl-D-alanine carboxypeptidase DacB (479 aa).

The N-terminal stretch at methionine 1 to alanine 26 is a signal peptide. Serine 69 serves as the catalytic Acyl-ester intermediate. Lysine 72 acts as the Proton acceptor in catalysis. Residue serine 310 is part of the active site. Lysine 420 serves as a coordination point for substrate.

This sequence belongs to the peptidase S13 family.

Its subcellular location is the periplasm. It carries out the reaction Preferential cleavage: (Ac)2-L-Lys-D-Ala-|-D-Ala. Also transpeptidation of peptidyl-alanyl moieties that are N-acyl substituents of D-alanine.. Its pathway is cell wall biogenesis; peptidoglycan biosynthesis. Functionally, not involved in transpeptidation but exclusively catalyzes a DD-carboxypeptidase and DD-endopeptidase reaction. The sequence is that of D-alanyl-D-alanine carboxypeptidase DacB (dacB) from Haemophilus influenzae (strain ATCC 51907 / DSM 11121 / KW20 / Rd).